We begin with the raw amino-acid sequence, 143 residues long: uncharacterized protein (143 aa).

The disordered stretch occupies residues 35–59; that stretch reads ITKDRGDRDDGRYGEPRIQRKPGQL. Residues 36–52 are compositionally biased toward basic and acidic residues; it reads TKDRGDRDDGRYGEPRI.

This is an uncharacterized protein from Streptomyces fradiae (Streptomyces roseoflavus).